The following is a 341-amino-acid chain: HTH-type transcriptional repressor PurR (341 aa).

Residues 2–56 (ATIKDVAKRANVSTTTVSHVINKTRFVAEETRNAVWAAIKELHYSPSAVARSLKV) form the HTH lacI-type domain. Positions 4–23 (IKDVAKRANVSTTTVSHVIN) form a DNA-binding region, H-T-H motif. A DNA-binding region spans residues 48–56 (SAVARSLKV). Hypoxanthine contacts are provided by tyrosine 73, arginine 190, threonine 192, phenylalanine 221, and aspartate 275.

Homodimer.

It functions in the pathway purine metabolism; purine nucleotide biosynthesis [regulation]. Is the main repressor of the genes involved in the de novo synthesis of purine nucleotides, regulating purB, purC, purEK, purF, purHD, purL, purMN and guaBA expression. PurR is allosterically activated to bind its cognate DNA by binding the purine corepressors, hypoxanthine or guanine, thereby effecting transcription repression. In Klebsiella pneumoniae subsp. pneumoniae (strain ATCC 700721 / MGH 78578), this protein is HTH-type transcriptional repressor PurR.